Reading from the N-terminus, the 323-residue chain is MKTTFLDFEQPIAELEAKIEELRFVQDDSAVDISEEISRLAGKSQQLTKDIYANLTPWQVAQIARHPQRPYTLDYVREIFTDFHELHGDRTFADDLSIIGGLARFNGQACMVIGHQKGRDTKERAMRNFGMPKPEGYRKAKRLMELADKFGLPIFTFVDTPGAFPGIDAEERGQSEAIGHNLYVMAGLKVPLIATIIGEGGSGGALAIAVGDVVQMLQFATYAVISPEGCASILWKTAEKAPEAAEALGLTAHRLKALGLIDKIVSEPLGGAHRDYKGMAAMLKRSLAESLRQFQGMSVKELQARRYERLLAYGKFKETGTQD.

The 255-residue stretch at 39-293 (RLAGKSQQLT…KRSLAESLRQ (255 aa)) folds into the CoA carboxyltransferase C-terminal domain.

The protein belongs to the AccA family. Acetyl-CoA carboxylase is a heterohexamer composed of biotin carboxyl carrier protein (AccB), biotin carboxylase (AccC) and two subunits each of ACCase subunit alpha (AccA) and ACCase subunit beta (AccD).

The protein resides in the cytoplasm. It catalyses the reaction N(6)-carboxybiotinyl-L-lysyl-[protein] + acetyl-CoA = N(6)-biotinyl-L-lysyl-[protein] + malonyl-CoA. The protein operates within lipid metabolism; malonyl-CoA biosynthesis; malonyl-CoA from acetyl-CoA: step 1/1. In terms of biological role, component of the acetyl coenzyme A carboxylase (ACC) complex. First, biotin carboxylase catalyzes the carboxylation of biotin on its carrier protein (BCCP) and then the CO(2) group is transferred by the carboxyltransferase to acetyl-CoA to form malonyl-CoA. This Cupriavidus necator (strain ATCC 17699 / DSM 428 / KCTC 22496 / NCIMB 10442 / H16 / Stanier 337) (Ralstonia eutropha) protein is Acetyl-coenzyme A carboxylase carboxyl transferase subunit alpha.